We begin with the raw amino-acid sequence, 175 residues long: Protein FMP23, mitochondrial (175 aa).

Residues 1–38 constitute a mitochondrion transit peptide; sequence MLINHLSKIRTVRHFSNIKPVLSKEVSRRVIVAPASHF.

It is found in the mitochondrion. May be involved in mitochondrial iron or copper homeostatis. This is Protein FMP23, mitochondrial (FMP23) from Saccharomyces cerevisiae (strain ATCC 204508 / S288c) (Baker's yeast).